Consider the following 262-residue polypeptide: Aminoglycoside (3'') (9) adenylyltransferase (262 aa).

The adenylyltransferase domain stretch occupies residues 1–157; it reads MTLSIPPSIQ…ERAERLFTPA (157 aa). Positions 36, 46, and 47 each coordinate ATP. Residues D47, D49, and E87 each contribute to the Mg(2+) site. The Proton acceptor role is filled by E87. D130 contacts ATP. The segment at 158 to 262 is helical domain; the sequence is PAAQLLKALR…AKAHIPTQFT (105 aa). Residues 173-178 and H185 contribute to the streptomycin site; that span reads WQSTAD. ATP is bound by residues K205 and Y231.

As to quaternary structure, monomer.

The enzyme catalyses streptomycin + ATP = 3''-O-adenylylstreptomycin + diphosphate. The catalysed reaction is spectinomycin + ATP = 9-O-adenylylspectinomycin + diphosphate. In terms of biological role, mediates bacterial resistance to the antibiotics streptomycin and spectinomycin, does not confer resistance to kanamycin. Binds ATP first, then antibiotic. The polypeptide is Aminoglycoside (3'') (9) adenylyltransferase (aadA) (Salmonella typhimurium (strain LT2 / SGSC1412 / ATCC 700720)).